The chain runs to 193 residues: Cytidylate kinase (193 aa).

Position 12 to 20 (12 to 20) interacts with ATP; the sequence is GLAGSGTTT.

The protein belongs to the cytidylate kinase family. Type 2 subfamily.

The protein resides in the cytoplasm. The catalysed reaction is CMP + ATP = CDP + ADP. It carries out the reaction dCMP + ATP = dCDP + ADP. This is Cytidylate kinase from Thermococcus kodakarensis (strain ATCC BAA-918 / JCM 12380 / KOD1) (Pyrococcus kodakaraensis (strain KOD1)).